A 426-amino-acid polypeptide reads, in one-letter code: MEQSNIDLEGALRALCQRARTAARALAPLDRAQKDRALRAIAERLRAEAGEGKRSAVLAANAEDVAAARAAGVSEALVDRLVLDEARLAAIAGAVLEIAAASDPVGQVVGMERRPNGLLVGQVRVPLGVIAMIYESRPNVTVDAAVLCLKSGNAAILRGGKEAARSNAALGELISDALRSVGLPADAVQMVPSLDREATRILLGLTGMIDLAIPRGGEGLIRFVAENARVPVIQHYKGVNHLYADAGCDLEMACRLVENGKLQRPGVCNALECLLVHEDVAAPLLGRVAALSERGLELRGDAATCALVPSARKAAEDDYGREFLAPILAVRVVRSLDEAIEHIGRYGSMHTEVICTPRYDHAQRFLREVDASCVLVNASSRFNDGGELGLGAEIGISTTKLHAYGPMGLASLTTLKWIAYGEGQTR.

Belongs to the gamma-glutamyl phosphate reductase family.

It is found in the cytoplasm. It catalyses the reaction L-glutamate 5-semialdehyde + phosphate + NADP(+) = L-glutamyl 5-phosphate + NADPH + H(+). Its pathway is amino-acid biosynthesis; L-proline biosynthesis; L-glutamate 5-semialdehyde from L-glutamate: step 2/2. Functionally, catalyzes the NADPH-dependent reduction of L-glutamate 5-phosphate into L-glutamate 5-semialdehyde and phosphate. The product spontaneously undergoes cyclization to form 1-pyrroline-5-carboxylate. The protein is Gamma-glutamyl phosphate reductase of Sorangium cellulosum (strain So ce56) (Polyangium cellulosum (strain So ce56)).